Reading from the N-terminus, the 225-residue chain is Uracil-DNA glycosylase 1 (225 aa).

Asp68 acts as the Proton acceptor in catalysis.

This sequence belongs to the uracil-DNA glycosylase (UDG) superfamily. UNG family.

The protein localises to the cytoplasm. The enzyme catalyses Hydrolyzes single-stranded DNA or mismatched double-stranded DNA and polynucleotides, releasing free uracil.. Functionally, excises uracil residues from the DNA which can arise as a result of misincorporation of dUMP residues by DNA polymerase or due to deamination of cytosine. This chain is Uracil-DNA glycosylase 1 (ung1), found in Streptomyces avermitilis (strain ATCC 31267 / DSM 46492 / JCM 5070 / NBRC 14893 / NCIMB 12804 / NRRL 8165 / MA-4680).